We begin with the raw amino-acid sequence, 585 residues long: Rhizobactin siderophore biosynthesis protein RhbC (585 aa).

This sequence belongs to the IucA/IucC family.

It functions in the pathway siderophore biosynthesis; rhizobactin biosynthesis. The chain is Rhizobactin siderophore biosynthesis protein RhbC (rhbC) from Rhizobium meliloti (strain 1021) (Ensifer meliloti).